The chain runs to 152 residues: D-aminoacyl-tRNA deacylase (152 aa).

The short motif at 142–143 (GP) is the Gly-cisPro motif, important for rejection of L-amino acids element.

It belongs to the DTD family. As to quaternary structure, homodimer.

Its subcellular location is the cytoplasm. It carries out the reaction glycyl-tRNA(Ala) + H2O = tRNA(Ala) + glycine + H(+). It catalyses the reaction a D-aminoacyl-tRNA + H2O = a tRNA + a D-alpha-amino acid + H(+). Its function is as follows. An aminoacyl-tRNA editing enzyme that deacylates mischarged D-aminoacyl-tRNAs. Also deacylates mischarged glycyl-tRNA(Ala), protecting cells against glycine mischarging by AlaRS. Acts via tRNA-based rather than protein-based catalysis; rejects L-amino acids rather than detecting D-amino acids in the active site. By recycling D-aminoacyl-tRNA to D-amino acids and free tRNA molecules, this enzyme counteracts the toxicity associated with the formation of D-aminoacyl-tRNA entities in vivo and helps enforce protein L-homochirality. In Paraburkholderia phytofirmans (strain DSM 17436 / LMG 22146 / PsJN) (Burkholderia phytofirmans), this protein is D-aminoacyl-tRNA deacylase.